The following is a 718-amino-acid chain: Phenylalanine--tRNA ligase beta subunit (718 aa).

One can recognise a tRNA-binding domain in the interval 39-153 (LNEISGIKFG…IFDLESNPLK (115 aa)). Positions 386 to 460 (SKKTFLDLNY…RFYGLEKLKD (75 aa)) constitute a B5 domain. Mg(2+)-binding residues include aspartate 438, aspartate 444, and aspartate 448.

The protein belongs to the phenylalanyl-tRNA synthetase beta subunit family. Type 1 subfamily. Tetramer of two alpha and two beta subunits. The cofactor is Mg(2+).

The protein localises to the cytoplasm. It carries out the reaction tRNA(Phe) + L-phenylalanine + ATP = L-phenylalanyl-tRNA(Phe) + AMP + diphosphate + H(+). The protein is Phenylalanine--tRNA ligase beta subunit of Mesomycoplasma hyopneumoniae (strain 7448) (Mycoplasma hyopneumoniae).